The chain runs to 268 residues: 4-hydroxy-tetrahydrodipicolinate reductase (268 aa).

Residues 7–12 and Glu33 contribute to the NAD(+) site; that span reads GAGGRM. Arg34 contributes to the NADP(+) binding site. NAD(+) contacts are provided by residues 97–99 and 121–124; these read GTT and SGNM. The active-site Proton donor/acceptor is His155. His156 serves as a coordination point for (S)-2,3,4,5-tetrahydrodipicolinate. The active-site Proton donor is the Lys159. 165 to 166 serves as a coordination point for (S)-2,3,4,5-tetrahydrodipicolinate; sequence GT.

The protein belongs to the DapB family.

The protein localises to the cytoplasm. It carries out the reaction (S)-2,3,4,5-tetrahydrodipicolinate + NAD(+) + H2O = (2S,4S)-4-hydroxy-2,3,4,5-tetrahydrodipicolinate + NADH + H(+). The catalysed reaction is (S)-2,3,4,5-tetrahydrodipicolinate + NADP(+) + H2O = (2S,4S)-4-hydroxy-2,3,4,5-tetrahydrodipicolinate + NADPH + H(+). Its pathway is amino-acid biosynthesis; L-lysine biosynthesis via DAP pathway; (S)-tetrahydrodipicolinate from L-aspartate: step 4/4. Catalyzes the conversion of 4-hydroxy-tetrahydrodipicolinate (HTPA) to tetrahydrodipicolinate. The sequence is that of 4-hydroxy-tetrahydrodipicolinate reductase from Brucella abortus (strain 2308).